The following is a 646-amino-acid chain: Lipoteichoic acid synthase (646 aa).

Topologically, residues 1–7 (MSLPKKK) are cytoplasmic. Residues 8 to 28 (IGIFAFFLLTVFTITLKTYFS) form a helical membrane-spanning segment. Residues 29-43 (YYVDFSLGVKGLVQN) lie on the Extracellular side of the membrane. The chain crosses the membrane as a helical span at residues 44–64 (LILIMNPYSLIALVLSVFLFF). Residues 65 to 68 (KGKK) are Cytoplasmic-facing. A helical transmembrane segment spans residues 69 to 89 (AFWFIFIGGFLLTFLLYANVV). The Extracellular segment spans residues 90–119 (YFRFFSDFLTFSTLNQAGNVESMGGAVSAS). A helical membrane pass occupies residues 120–140 (FKWYDFVYFIDTIIYLAILIF). Topologically, residues 141-153 (KRKWLDNRAFSKK) are cytoplasmic. A helical transmembrane segment spans residues 154–174 (FVPVVMATSVALFFLNLAFAE). At 175–646 (TDRPELLTRT…KSGPKGNEKK (472 aa)) the chain is on the extracellular side. Residues Glu255 and Thr300 each coordinate Mn(2+). Thr300 is an active-site residue. Residue His416 participates in substrate binding. Mn(2+) contacts are provided by Asp475 and His476.

Belongs to the LTA synthase family. Proteolytically cleaved.

It localises to the cell membrane. The protein resides in the secreted. It functions in the pathway cell wall biogenesis; lipoteichoic acid biosynthesis. Functionally, catalyzes the polymerization of lipoteichoic acid (LTA) polyglycerol phosphate, a reaction that presumably uses phosphatidylglycerol (PG) as substrate. Is required for staphylococcal growth and cell division process. This Staphylococcus epidermidis (strain ATCC 12228 / FDA PCI 1200) protein is Lipoteichoic acid synthase (ltaS).